The primary structure comprises 394 residues: MAKEIFQRTKPHMNVGTIGHVDHGKTTLTAAISIYCSKVNKDAKALKYEDIDNAPEEKARGITINARHIEYETANRHYAHVDCPGHADYIKNMITGAAQMDAAILLVAADSGAEPQTKEHLLLAQRMGIKKIIVFLNKLDLADPELVELVEVEVLELVEKYGFPSDTPIVKGSAFGAMSNPDDPEATKCIKELLETMDNYFDLPERDIDKPFLLAIEDVFSISGRGTVATGRIERGVIKVGQEVEIVGIRETRKTTVTGVEMFQKILEQGEAGDNVGLLLRGVDKKDIERGQVIAALGTITPHKKFKASIYCLTKEEGGRHKPFFSGYRPQFFFRTTDVTGMVSLEGKEMVMPGDNVDIVVELISSIAMDKNVEFAVREGGRTVASGRILEILE.

The tr-type G domain occupies 10 to 205 (KPHMNVGTIG…TMDNYFDLPE (196 aa)). The interval 19-26 (GHVDHGKT) is G1. 19–26 (GHVDHGKT) contributes to the GTP binding site. Thr-26 is a Mg(2+) binding site. The interval 61-65 (GITIN) is G2. Residues 82 to 85 (DCPG) are G3. GTP contacts are provided by residues 82–86 (DCPGH) and 137–140 (NKLD). The segment at 137 to 140 (NKLD) is G4. The segment at 173-175 (SAF) is G5.

It belongs to the TRAFAC class translation factor GTPase superfamily. Classic translation factor GTPase family. EF-Tu/EF-1A subfamily. As to quaternary structure, monomer.

It localises to the cytoplasm. The catalysed reaction is GTP + H2O = GDP + phosphate + H(+). In terms of biological role, GTP hydrolase that promotes the GTP-dependent binding of aminoacyl-tRNA to the A-site of ribosomes during protein biosynthesis. The sequence is that of Elongation factor Tu from Borrelia duttonii (strain Ly).